A 419-amino-acid chain; its full sequence is Putative actin-fragmin kinase DDB_G0279609 (419 aa).

The interval 73-94 (INNNNNSINNNNNNNNKNKNKN) is disordered.

It belongs to the protein kinase superfamily. AFK Ser/Thr protein kinase family.

The chain is Putative actin-fragmin kinase DDB_G0279609 from Dictyostelium discoideum (Social amoeba).